Reading from the N-terminus, the 231-residue chain is 7-cyano-7-deazaguanine synthase (231 aa).

11–21 (LSAGLDSTVNA) is a binding site for ATP. Cys197, Cys205, Cys208, and Cys211 together coordinate Zn(2+).

The protein belongs to the QueC family. Requires Zn(2+) as cofactor.

The enzyme catalyses 7-carboxy-7-deazaguanine + NH4(+) + ATP = 7-cyano-7-deazaguanine + ADP + phosphate + H2O + H(+). It participates in purine metabolism; 7-cyano-7-deazaguanine biosynthesis. Its function is as follows. Catalyzes the ATP-dependent conversion of 7-carboxy-7-deazaguanine (CDG) to 7-cyano-7-deazaguanine (preQ(0)). The sequence is that of 7-cyano-7-deazaguanine synthase from Bdellovibrio bacteriovorus (strain ATCC 15356 / DSM 50701 / NCIMB 9529 / HD100).